The following is a 284-amino-acid chain: Ribosomal RNA small subunit methyltransferase A (284 aa).

S-adenosyl-L-methionine contacts are provided by Asn26, Leu28, Gly53, Glu74, Asp97, and Asn127.

The protein belongs to the class I-like SAM-binding methyltransferase superfamily. rRNA adenine N(6)-methyltransferase family. RsmA subfamily.

It is found in the cytoplasm. It carries out the reaction adenosine(1518)/adenosine(1519) in 16S rRNA + 4 S-adenosyl-L-methionine = N(6)-dimethyladenosine(1518)/N(6)-dimethyladenosine(1519) in 16S rRNA + 4 S-adenosyl-L-homocysteine + 4 H(+). Functionally, specifically dimethylates two adjacent adenosines (A1518 and A1519) in the loop of a conserved hairpin near the 3'-end of 16S rRNA in the 30S particle. May play a critical role in biogenesis of 30S subunits. This Anaeromyxobacter dehalogenans (strain 2CP-1 / ATCC BAA-258) protein is Ribosomal RNA small subunit methyltransferase A.